Consider the following 597-residue polypeptide: DNA mismatch repair protein MutL (597 aa).

It belongs to the DNA mismatch repair MutL/HexB family.

Functionally, this protein is involved in the repair of mismatches in DNA. It is required for dam-dependent methyl-directed DNA mismatch repair. May act as a 'molecular matchmaker', a protein that promotes the formation of a stable complex between two or more DNA-binding proteins in an ATP-dependent manner without itself being part of a final effector complex. The protein is DNA mismatch repair protein MutL of Rhodopseudomonas palustris (strain BisB5).